The chain runs to 213 residues: RNA polymerase I subunit H (213 aa).

Positions 1–19 are enriched in basic and acidic residues; that stretch reads MVERMKKDTGDETKTKVQE. The tract at residues 1–70 is disordered; sequence MVERMKKDTG…AREFTDKPWR (70 aa). The segment covering 21–31 has biased composition (pro residues); the sequence is PPSPSPPPPPP. Basic and acidic residues-rich tracts occupy residues 43 to 53 and 60 to 69; these read VPEREKKQIER and HAREFTDKPW.

As to expression, expressed during spermatogenesis, initially at pachytene stage with abundance increasing in round spermatids and decreasing again during spermatid elongation.

May be involved in male sterility. In Mus musculus (Mouse), this protein is RNA polymerase I subunit H.